The following is a 425-amino-acid chain: bZIP transcription factor RISBZ2 (425 aa).

Disordered regions lie at residues 1–50 (MERV…GGGG) and 169–257 (NSIG…AAHL). A compositionally biased stretch (gly residues) spans 30-50 (QGGGGVASGGGGGVAGGGGGG). Over residues 171-182 (IGGNATPVQNML) the composition is skewed to polar residues. The span at 213–222 (SDDDDMEGEA) shows a compositional bias: acidic residues. Residues 231 to 247 (ADQRLQRRKQSNRESAR) are compositionally biased toward basic and acidic residues. A bZIP domain is found at 232–295 (DQRLQRRKQS…NDAAVDNRVL (64 aa)). A basic motif region spans residues 234–253 (RLQRRKQSNRESARRSRSRK). Residues 260-274 (LEAQVSQLRVENSSL) form a leucine-zipper region. Residues 334 to 354 (MPFNSSPSEATSDAAVPIQDD) are disordered.

As to quaternary structure, heterodimer with RISBZ1/BZIP58.

The protein resides in the nucleus. Transcriptional activator that binds to the DNA specific sequence 5'-GCCACGT[AC]AG-3' found in the alpha-globulin gene promoter. Does not bind to promoters of other major storage genes such as glutelin, prolamin and albumin. Binds to the DNA specific sequence 5'-TGAGTCA-3' found in seed storage protein gene promoters. This Oryza sativa subsp. japonica (Rice) protein is bZIP transcription factor RISBZ2.